The following is a 461-amino-acid chain: tRNA modification GTPase MnmE (461 aa).

Residues arginine 27, glutamate 89, and arginine 128 each coordinate (6S)-5-formyl-5,6,7,8-tetrahydrofolate. Residues 224-382 (GLATAIVGQP…LEELINKLFF (159 aa)) form the TrmE-type G domain. Asparagine 234 provides a ligand contact to K(+). GTP is bound by residues 234–239 (NVGKSS), 253–259 (TDVAGTT), and 278–281 (DTAG). Residue serine 238 coordinates Mg(2+). Residues threonine 253, valine 255, and threonine 258 each coordinate K(+). Mg(2+) is bound at residue threonine 259. Residue lysine 461 participates in (6S)-5-formyl-5,6,7,8-tetrahydrofolate binding.

This sequence belongs to the TRAFAC class TrmE-Era-EngA-EngB-Septin-like GTPase superfamily. TrmE GTPase family. As to quaternary structure, homodimer. Heterotetramer of two MnmE and two MnmG subunits. Requires K(+) as cofactor.

It localises to the cytoplasm. Its function is as follows. Exhibits a very high intrinsic GTPase hydrolysis rate. Involved in the addition of a carboxymethylaminomethyl (cmnm) group at the wobble position (U34) of certain tRNAs, forming tRNA-cmnm(5)s(2)U34. This Lactobacillus acidophilus (strain ATCC 700396 / NCK56 / N2 / NCFM) protein is tRNA modification GTPase MnmE.